A 461-amino-acid chain; its full sequence is Divalent metal cation transporter MntH (461 aa).

Transmembrane regions (helical) follow at residues 56 to 76 (AMAF…PGNW), 89 to 109 (TLLA…SLCA), 132 to 152 (AMVL…AEVI), 160 to 180 (LIFG…VFLI), 193 to 213 (ALVI…LALA), 230 to 250 (IVTN…TVMP), 285 to 305 (IALM…AATF), 322 to 342 (LLAP…ALLC), 378 to 398 (AIAI…GTGQ), 399 to 419 (LLIL…FPLV), and 433 to 453 (SPLW…ALNV).

It belongs to the NRAMP family.

Its subcellular location is the cell inner membrane. Its function is as follows. H(+)-stimulated, divalent metal cation uptake system. The polypeptide is Divalent metal cation transporter MntH (Agrobacterium fabrum (strain C58 / ATCC 33970) (Agrobacterium tumefaciens (strain C58))).